The sequence spans 430 residues: Nitroalkane oxidase (430 aa).

Residues 132-135 (LVFS), 140-142 (VAN), 170-172 (WAT), Arg-301, Gln-311, 372-376 (NAVGI), and 397-401 (IFDGG) contribute to the FAD site. The active-site Proton acceptor is Asp-399.

This sequence belongs to the acyl-CoA dehydrogenase family. In terms of assembly, homotetramer. It depends on FAD as a cofactor.

The enzyme catalyses a primary nitroalkane + O2 + H2O = an aldehyde + nitrite + H2O2 + H(+). It carries out the reaction a secondary nitroalkane + O2 + H2O = a ketone + nitrite + H2O2 + H(+). Nitroalkane oxidase (NAO) catalyzes the oxidation of nitroalkanes to the corresponding aldehydes or ketones with the release of nitrite and the consumption of molecular oxygen to yield hydrogen peroxide. NAO is unusual, since it catalyzes substrate oxidation by removing a substrate proton to form a carbanion intermediate. Prefers longer nitroalkanes, with 1-nitrohexane having the highest activity. The protein is Nitroalkane oxidase of Podospora anserina (strain S / ATCC MYA-4624 / DSM 980 / FGSC 10383) (Pleurage anserina).